A 510-amino-acid polypeptide reads, in one-letter code: Hepatic triacylglycerol lipase (510 aa).

The N-terminal stretch at 1–21 is a signal peptide; sequence MGNPLQISIFLVFCIFIQSSA. N-linked (GlcNAc...) asparagine glycosylation is present at asparagine 79. Serine 169 (nucleophile) is an active-site residue. The active-site Charge relay system is aspartate 195. The interval 255-278 is essential for determining substrate specificity; the sequence is CHFLELYKHIAEHGLNAITQTIKC. Histidine 280 (charge relay system) is an active-site residue. Residues 353–487 form the PLAT domain; the sequence is YHYQFKIQFI…HPSQEKVFVN (135 aa). A glycan (N-linked (GlcNAc...) asparagine) is linked at asparagine 398.

This sequence belongs to the AB hydrolase superfamily. Lipase family. In terms of assembly, homodimer.

It is found in the secreted. The enzyme catalyses a triacylglycerol + H2O = a diacylglycerol + a fatty acid + H(+). It catalyses the reaction a 1-acyl-sn-glycero-3-phosphocholine + H2O = sn-glycerol 3-phosphocholine + a fatty acid + H(+). It carries out the reaction a 1,2-diacyl-sn-glycero-3-phosphocholine + H2O = a 2-acyl-sn-glycero-3-phosphocholine + a fatty acid + H(+). The catalysed reaction is 1,2,3-tri-(9Z-octadecenoyl)-glycerol + H2O = di-(9Z)-octadecenoylglycerol + (9Z)-octadecenoate + H(+). The enzyme catalyses 1,2-di-(9Z-octadecenoyl)-sn-glycero-3-phosphocholine + H2O = (9Z-octadecenoyl)-sn-glycero-3-phosphocholine + (9Z)-octadecenoate + H(+). It catalyses the reaction 1,2,3-tributanoylglycerol + H2O = dibutanoylglycerol + butanoate + H(+). It carries out the reaction 1,2-dihexadecanoyl-sn-glycero-3-phosphocholine + H2O = hexadecanoyl-sn-glycero-3-phosphocholine + hexadecanoate + H(+). The catalysed reaction is 1,2-di-(9Z-octadecenoyl)-sn-glycerol + H2O = 2-(9Z-octadecenoyl)-glycerol + (9Z)-octadecenoate + H(+). The enzyme catalyses 1,2,3-tri-(9Z-octadecenoyl)-glycerol + H2O = 2,3-di-(9Z)-octadecenoyl-sn-glycerol + (9Z)-octadecenoate + H(+). It catalyses the reaction 1-(9Z-octadecenoyl)-sn-glycero-3-phospho-L-serine + H2O = sn-glycero-3-phospho-L-serine + (9Z)-octadecenoate + H(+). It carries out the reaction 1-hexadecanoyl-sn-glycero-3-phosphocholine + H2O = sn-glycerol 3-phosphocholine + hexadecanoate + H(+). The catalysed reaction is 1,3-di-(9Z-octadecenoyl)-glycerol + H2O = 3-(9Z-octadecenoyl)-sn-glycerol + (9Z)-octadecenoate + H(+). Its function is as follows. Catalyzes the hydrolysis of triglycerides and phospholipids present in circulating plasma lipoproteins, including chylomicrons, intermediate density lipoproteins (IDL), low density lipoproteins (LDL) of large size and high density lipoproteins (HDL), releasing free fatty acids (FFA) and smaller lipoprotein particles. Also exhibits lysophospholipase activity. Can hydrolyze both neutral lipid and phospholipid substrates but shows a greater binding affinity for neutral lipid substrates than phospholipid substrates. In native LDL, preferentially hydrolyzes the phosphatidylcholine species containing polyunsaturated fatty acids at sn-2 position. The sequence is that of Hepatic triacylglycerol lipase (Lipc) from Mus musculus (Mouse).